The following is a 324-amino-acid chain: Pseudouridine-5'-phosphate glycosidase (324 aa).

Glu-43 serves as the catalytic Proton donor. Lys-104 and Val-124 together coordinate substrate. Asp-156 serves as a coordination point for Mn(2+). 158–160 (SAD) is a binding site for substrate. Lys-177 serves as the catalytic Nucleophile.

Belongs to the pseudouridine-5'-phosphate glycosidase family. Homotrimer. The cofactor is Mn(2+).

It catalyses the reaction D-ribose 5-phosphate + uracil = psi-UMP + H2O. In terms of biological role, catalyzes the reversible cleavage of pseudouridine 5'-phosphate (PsiMP) to ribose 5-phosphate and uracil. Functions biologically in the cleavage direction, as part of a pseudouridine degradation pathway. The protein is Pseudouridine-5'-phosphate glycosidase of Salinispora tropica (strain ATCC BAA-916 / DSM 44818 / JCM 13857 / NBRC 105044 / CNB-440).